The following is a 94-amino-acid chain: Putative pterin-4-alpha-carbinolamine dehydratase (94 aa).

Belongs to the pterin-4-alpha-carbinolamine dehydratase family.

The catalysed reaction is (4aS,6R)-4a-hydroxy-L-erythro-5,6,7,8-tetrahydrobiopterin = (6R)-L-erythro-6,7-dihydrobiopterin + H2O. The chain is Putative pterin-4-alpha-carbinolamine dehydratase from Mycobacterium sp. (strain JLS).